Here is a 366-residue protein sequence, read N- to C-terminus: UDP-N-acetylglucosamine--N-acetylmuramyl-(pentapeptide) pyrophosphoryl-undecaprenol N-acetylglucosamine transferase (366 aa).

UDP-N-acetyl-alpha-D-glucosamine-binding positions include 14-16, asparagine 125, arginine 168, serine 196, and glutamine 297; that span reads TGG.

This sequence belongs to the glycosyltransferase 28 family. MurG subfamily.

The protein resides in the cell inner membrane. The enzyme catalyses di-trans,octa-cis-undecaprenyl diphospho-N-acetyl-alpha-D-muramoyl-L-alanyl-D-glutamyl-meso-2,6-diaminopimeloyl-D-alanyl-D-alanine + UDP-N-acetyl-alpha-D-glucosamine = di-trans,octa-cis-undecaprenyl diphospho-[N-acetyl-alpha-D-glucosaminyl-(1-&gt;4)]-N-acetyl-alpha-D-muramoyl-L-alanyl-D-glutamyl-meso-2,6-diaminopimeloyl-D-alanyl-D-alanine + UDP + H(+). Its pathway is cell wall biogenesis; peptidoglycan biosynthesis. Its function is as follows. Cell wall formation. Catalyzes the transfer of a GlcNAc subunit on undecaprenyl-pyrophosphoryl-MurNAc-pentapeptide (lipid intermediate I) to form undecaprenyl-pyrophosphoryl-MurNAc-(pentapeptide)GlcNAc (lipid intermediate II). This Rhodopseudomonas palustris (strain ATCC BAA-98 / CGA009) protein is UDP-N-acetylglucosamine--N-acetylmuramyl-(pentapeptide) pyrophosphoryl-undecaprenol N-acetylglucosamine transferase.